The chain runs to 340 residues: uncharacterized protein (340 aa).

It localises to the virion. This is an uncharacterized protein from Acanthamoeba polyphaga (Amoeba).